The primary structure comprises 264 residues: NAD kinase (264 aa).

The active-site Proton acceptor is aspartate 45. NAD(+) contacts are provided by residues 45 to 46 (DG), histidine 50, 121 to 122 (NE), arginine 147, aspartate 149, alanine 184, and glutamine 224.

This sequence belongs to the NAD kinase family. The cofactor is a divalent metal cation.

Its subcellular location is the cytoplasm. It carries out the reaction NAD(+) + ATP = ADP + NADP(+) + H(+). Its function is as follows. Involved in the regulation of the intracellular balance of NAD and NADP, and is a key enzyme in the biosynthesis of NADP. Catalyzes specifically the phosphorylation on 2'-hydroxyl of the adenosine moiety of NAD to yield NADP. The polypeptide is NAD kinase (Lysinibacillus sphaericus (strain C3-41)).